Consider the following 216-residue polypeptide: Large ribosomal subunit protein uL1 (216 aa).

Belongs to the universal ribosomal protein uL1 family. In terms of assembly, part of the 50S ribosomal subunit.

In terms of biological role, binds directly to 23S rRNA. Probably involved in E site tRNA release. Its function is as follows. Protein L1 is also a translational repressor protein, it controls the translation of its operon by binding to its mRNA. The polypeptide is Large ribosomal subunit protein uL1 (Thermococcus kodakarensis (strain ATCC BAA-918 / JCM 12380 / KOD1) (Pyrococcus kodakaraensis (strain KOD1))).